Consider the following 139-residue polypeptide: Lymphocyte antigen 6H (139 aa).

A signal peptide spans 1–25 (MLPAAMKSLGLALLALLLCPSPAHG). The 88-residue stretch at 26–113 (LWCQDCTLAN…CEKDLCNGAS (88 aa)) folds into the UPAR/Ly6 domain. 5 disulfide bridges follow: Cys-28–Cys-51, Cys-31–Cys-39, Cys-44–Cys-72, Cys-76–Cys-103, and Cys-104–Cys-109. N-linked (GlcNAc...) asparagine glycosylation occurs at Asn-35. Asn-110 carries the GPI-anchor amidated asparagine lipid modification. Residues 111–139 (GASVAGRSPWALAGGLLLSLGPALLWAGP) constitute a propeptide, removed in mature form.

As to quaternary structure, interacts with CHRNA4 and CHRNA7. In terms of tissue distribution, strongly expressed in brain, also found in lower levels in eye and reproductive tissues.

The protein resides in the cell membrane. Its function is as follows. Believed to act as modulator of nicotinic acetylcholine receptors (nAChRs) activity. In vitro inhibits alpha-3:beta-4-containing nAChRs maximum response. In vitro inhibits alpha-3:beta-4-containing nAChRs maximum response. May play a role in the intracellular trafficking of alpha-7-containing nAChRs and may inhibit their expression at the cell surface. Seems to inhibit alpha-7/CHRNA7 signaling in hippocampal neurons. The protein is Lymphocyte antigen 6H (Ly6h) of Mus musculus (Mouse).